A 426-amino-acid chain; its full sequence is Dihydrofolate synthase/folylpolyglutamate synthase (426 aa).

Residue 58-61 (GKGS) participates in ATP binding. Residue serine 82 coordinates Mg(2+). Position 121-124 (121-124 (TRFE)) interacts with 7,8-dihydropteroate. Glutamate 145 provides a ligand contact to Mg(2+). 152–154 (LDA) serves as a coordination point for 7,8-dihydropteroate. Histidine 172 is a binding site for Mg(2+). Residues arginine 289 and aspartate 302 each coordinate ATP.

The protein belongs to the folylpolyglutamate synthase family. In terms of assembly, monomer. The cofactor is Mg(2+).

It catalyses the reaction 7,8-dihydropteroate + L-glutamate + ATP = 7,8-dihydrofolate + ADP + phosphate + H(+). The catalysed reaction is (6S)-5,6,7,8-tetrahydrofolyl-(gamma-L-Glu)(n) + L-glutamate + ATP = (6S)-5,6,7,8-tetrahydrofolyl-(gamma-L-Glu)(n+1) + ADP + phosphate + H(+). It carries out the reaction 10-formyltetrahydrofolyl-(gamma-L-Glu)(n) + L-glutamate + ATP = 10-formyltetrahydrofolyl-(gamma-L-Glu)(n+1) + ADP + phosphate + H(+). The enzyme catalyses (6R)-5,10-methylenetetrahydrofolyl-(gamma-L-Glu)(n) + L-glutamate + ATP = (6R)-5,10-methylenetetrahydrofolyl-(gamma-L-Glu)(n+1) + ADP + phosphate + H(+). The protein operates within cofactor biosynthesis; tetrahydrofolate biosynthesis; 7,8-dihydrofolate from 2-amino-4-hydroxy-6-hydroxymethyl-7,8-dihydropteridine diphosphate and 4-aminobenzoate: step 2/2. Its pathway is cofactor biosynthesis; tetrahydrofolylpolyglutamate biosynthesis. Its function is as follows. Functions in two distinct reactions of the de novo folate biosynthetic pathway. Catalyzes the addition of a glutamate residue to dihydropteroate (7,8-dihydropteroate or H2Pte) to form dihydrofolate (7,8-dihydrofolate monoglutamate or H2Pte-Glu). Also catalyzes successive additions of L-glutamate to tetrahydrofolate or 10-formyltetrahydrofolate or 5,10-methylenetetrahydrofolate, leading to folylpolyglutamate derivatives. The chain is Dihydrofolate synthase/folylpolyglutamate synthase (folC) from Buchnera aphidicola subsp. Baizongia pistaciae (strain Bp).